Consider the following 284-residue polypeptide: Pantothenate synthetase (284 aa).

An ATP-binding site is contributed by 30 to 37; the sequence is MGNLHDGH. The active-site Proton donor is His-37. Gln-61 is a binding site for (R)-pantoate. A beta-alanine-binding site is contributed by Gln-61. 149–152 is a binding site for ATP; that stretch reads GEKD. Residue Gln-155 coordinates (R)-pantoate. ATP-binding positions include Val-178 and 186-189; that span reads LSSR.

Belongs to the pantothenate synthetase family. Homodimer.

Its subcellular location is the cytoplasm. The enzyme catalyses (R)-pantoate + beta-alanine + ATP = (R)-pantothenate + AMP + diphosphate + H(+). It functions in the pathway cofactor biosynthesis; (R)-pantothenate biosynthesis; (R)-pantothenate from (R)-pantoate and beta-alanine: step 1/1. Its function is as follows. Catalyzes the condensation of pantoate with beta-alanine in an ATP-dependent reaction via a pantoyl-adenylate intermediate. This is Pantothenate synthetase from Cronobacter sakazakii (strain ATCC BAA-894) (Enterobacter sakazakii).